Reading from the N-terminus, the 62-residue chain is Photosystem II reaction center protein Z (62 aa).

The next 2 helical transmembrane spans lie at 8–28 (ALFA…VVLA) and 41–61 (FSGI…NSFV).

This sequence belongs to the PsbZ family. As to quaternary structure, PSII is composed of 1 copy each of membrane proteins PsbA, PsbB, PsbC, PsbD, PsbE, PsbF, PsbH, PsbI, PsbJ, PsbK, PsbL, PsbM, PsbT, PsbY, PsbZ, Psb30/Ycf12, at least 3 peripheral proteins of the oxygen-evolving complex and a large number of cofactors. It forms dimeric complexes.

The protein localises to the plastid. It localises to the chloroplast thylakoid membrane. Its function is as follows. May control the interaction of photosystem II (PSII) cores with the light-harvesting antenna, regulates electron flow through the 2 photosystem reaction centers. PSII is a light-driven water plastoquinone oxidoreductase, using light energy to abstract electrons from H(2)O, generating a proton gradient subsequently used for ATP formation. This chain is Photosystem II reaction center protein Z, found in Chlorella vulgaris (Green alga).